The chain runs to 287 residues: Formamidopyrimidine-DNA glycosylase (287 aa).

Proline 2 (schiff-base intermediate with DNA) is an active-site residue. Glutamate 3 (proton donor) is an active-site residue. Lysine 58 acts as the Proton donor; for beta-elimination activity in catalysis. DNA-binding residues include histidine 104, arginine 123, and arginine 166. The FPG-type zinc finger occupies arginine 251–arginine 287. The Proton donor; for delta-elimination activity role is filled by arginine 277.

Belongs to the FPG family. As to quaternary structure, monomer. Zn(2+) serves as cofactor.

It carries out the reaction Hydrolysis of DNA containing ring-opened 7-methylguanine residues, releasing 2,6-diamino-4-hydroxy-5-(N-methyl)formamidopyrimidine.. The enzyme catalyses 2'-deoxyribonucleotide-(2'-deoxyribose 5'-phosphate)-2'-deoxyribonucleotide-DNA = a 3'-end 2'-deoxyribonucleotide-(2,3-dehydro-2,3-deoxyribose 5'-phosphate)-DNA + a 5'-end 5'-phospho-2'-deoxyribonucleoside-DNA + H(+). In terms of biological role, involved in base excision repair of DNA damaged by oxidation or by mutagenic agents. Acts as a DNA glycosylase that recognizes and removes damaged bases. Has a preference for oxidized purines, such as 7,8-dihydro-8-oxoguanine (8-oxoG). Has AP (apurinic/apyrimidinic) lyase activity and introduces nicks in the DNA strand. Cleaves the DNA backbone by beta-delta elimination to generate a single-strand break at the site of the removed base with both 3'- and 5'-phosphates. The polypeptide is Formamidopyrimidine-DNA glycosylase (Phenylobacterium zucineum (strain HLK1)).